We begin with the raw amino-acid sequence, 310 residues long: Nuclear hormone receptor family member nhr-89 (310 aa).

The nuclear receptor DNA-binding region spans 5–79 (EGPCRVCHSV…SGMRRDCVRK (75 aa)). NR C4-type zinc fingers lie at residues 8 to 29 (CRVC…CMSC) and 43 to 67 (CPAN…YNKC). Residues 101–310 (KLSESYEELL…TLHQKYQIPF (210 aa)) form the NR LBD domain.

Belongs to the nuclear hormone receptor family.

Its subcellular location is the nucleus. Orphan nuclear receptor. The protein is Nuclear hormone receptor family member nhr-89 (nhr-89) of Caenorhabditis elegans.